Consider the following 320-residue polypeptide: GTP 3',8-cyclase (320 aa).

A Radical SAM core domain is found at 5–225 (QFGRKINYLR…IQLIKKDEKA (221 aa)). Position 14 (Arg14) interacts with GTP. Residues Cys21 and Cys25 each contribute to the [4Fe-4S] cluster site. Residue Tyr27 coordinates S-adenosyl-L-methionine. Cys28 serves as a coordination point for [4Fe-4S] cluster. A GTP-binding site is contributed by Arg64. Gly68 provides a ligand contact to S-adenosyl-L-methionine. GTP is bound at residue Thr95. Residue Ser119 participates in S-adenosyl-L-methionine binding. Lys155 contributes to the GTP binding site. Met189 serves as a coordination point for S-adenosyl-L-methionine. Residues Cys248 and Cys251 each contribute to the [4Fe-4S] cluster site. 253–255 (RIR) contacts GTP. Position 265 (Cys265) interacts with [4Fe-4S] cluster.

The protein belongs to the radical SAM superfamily. MoaA family. In terms of assembly, monomer and homodimer. Requires [4Fe-4S] cluster as cofactor.

It catalyses the reaction GTP + AH2 + S-adenosyl-L-methionine = (8S)-3',8-cyclo-7,8-dihydroguanosine 5'-triphosphate + 5'-deoxyadenosine + L-methionine + A + H(+). Its pathway is cofactor biosynthesis; molybdopterin biosynthesis. Its function is as follows. Catalyzes the cyclization of GTP to (8S)-3',8-cyclo-7,8-dihydroguanosine 5'-triphosphate. This Campylobacter jejuni subsp. jejuni serotype O:6 (strain 81116 / NCTC 11828) protein is GTP 3',8-cyclase.